The primary structure comprises 372 residues: MFDFQINAHCSHTRARVGCFRTPHGSVNTPRFMPVGTLATVKGITATQLADTGAQMVLANTYHLHLQPGEGIVADAGGLHRFMGWDRPLLTDSGGFQIFSLADLNRIDDHGVVFRNPRNGSQIELTPERAIEIQMALGADVAMAFDQCPPYPASESDVETACKRTHAWLERCSNTHQHANQALFGIVQGGCFPHLREQSAQIVASFGLPGIAIGGVSVGEPVEDIHRIVRQVSPLLPQDRPRYLMGIGTLREIAIAVASGIDLFDCVLPTRLGRHGTALVAGERWNLRNARFREDHTPLDQSCTCTACRHHSRAYLHHLIRNEELLGLTLLSLHNLTQLIRFTSAISQAIQDDCFSEDFAPWQPDSAAHHTW.

The Proton acceptor role is filled by Asp-92. Substrate contacts are provided by residues 92–96 (DSGGF), Asp-146, Gln-188, and Gly-215. The tract at residues 246–252 (GIGTLRE) is RNA binding. The active-site Nucleophile is the Asp-265. The interval 270 to 274 (TRLGR) is RNA binding; important for wobble base 34 recognition. 4 residues coordinate Zn(2+): Cys-303, Cys-305, Cys-308, and His-334.

This sequence belongs to the queuine tRNA-ribosyltransferase family. Homodimer. Within each dimer, one monomer is responsible for RNA recognition and catalysis, while the other monomer binds to the replacement base PreQ1. It depends on Zn(2+) as a cofactor.

The catalysed reaction is 7-aminomethyl-7-carbaguanine + guanosine(34) in tRNA = 7-aminomethyl-7-carbaguanosine(34) in tRNA + guanine. It participates in tRNA modification; tRNA-queuosine biosynthesis. Catalyzes the base-exchange of a guanine (G) residue with the queuine precursor 7-aminomethyl-7-deazaguanine (PreQ1) at position 34 (anticodon wobble position) in tRNAs with GU(N) anticodons (tRNA-Asp, -Asn, -His and -Tyr). Catalysis occurs through a double-displacement mechanism. The nucleophile active site attacks the C1' of nucleotide 34 to detach the guanine base from the RNA, forming a covalent enzyme-RNA intermediate. The proton acceptor active site deprotonates the incoming PreQ1, allowing a nucleophilic attack on the C1' of the ribose to form the product. After dissociation, two additional enzymatic reactions on the tRNA convert PreQ1 to queuine (Q), resulting in the hypermodified nucleoside queuosine (7-(((4,5-cis-dihydroxy-2-cyclopenten-1-yl)amino)methyl)-7-deazaguanosine). In Prochlorococcus marinus (strain MIT 9313), this protein is Queuine tRNA-ribosyltransferase.